Consider the following 441-residue polypeptide: Inner kinetochore subunit mis17 (441 aa).

Positions 160–173 are enriched in polar residues; sequence SSILENSPPNKVQR. The tract at residues 160–240 is disordered; that stretch reads SSILENSPPN…TSSMAPRNLL (81 aa). The span at 174-183 shows a compositional bias: low complexity; sequence LSSLDSSQDS. The span at 192–201 shows a compositional bias: polar residues; it reads VTGTTFSSQA. Low complexity predominate over residues 217-233; that stretch reads SLTNQSSSLQSSLQTSS.

The protein belongs to the CENP-U/AME1 family. As to quaternary structure, component of the heterotetrameric kinetochore subcomplex COMA, which consists of fta2, fta7, mal2 and mis17. The COMA subcomplex is part of a larger constitutive centromere-associated network (CCAN) (also known as central kinetochore Sim4 complex in fission yeast), which is composed of at least cnl2, cnp3, cnp20, fta1, fta2, fta3, fta4, fta6, fta7, mal2, mhf1, mhf2, mis6, mis15, mis17, sim4 and wip1. Interacts with mis6 and mis15.

The protein resides in the nucleus. Its subcellular location is the chromosome. It localises to the centromere. The protein localises to the kinetochore. Component of the kinetochore, a multiprotein complex that assembles on centromeric DNA and attaches chromosomes to spindle microtubules, mediating chromosome segregation and sister chromatid segregation during meiosis and mitosis. Component of the inner kinetochore COMA complex, which connects centromere-associated proteins and the outer kinetochore. COMA interacts with other inner kinetochore proteins to form the inner kinetochore constitutive centromere-associated network (CCAN), which serves as a structural platform for outer kinetochore assembly. The polypeptide is Inner kinetochore subunit mis17 (mis17) (Schizosaccharomyces pombe (strain 972 / ATCC 24843) (Fission yeast)).